Here is a 254-residue protein sequence, read N- to C-terminus: Protein orai-2 (254 aa).

Helical transmembrane passes span Thr-66 to Leu-83, Leu-94 to Ile-114, Leu-148 to Leu-168, and Ala-196 to Ile-216.

The protein belongs to the Orai family. In terms of assembly, oligomerizes in homomeric and heteromeric ORAI complexes. Native CRAC channels most likely consist of hexameric ORAI heteromers, implying that diverse ORAI1, ORAI2 and ORAI3 subunit combinations with distinct biophysical properties can operate in a cell-type specific way. Interacts with STIM1; this regulates channel activity. Interacts with CRACR2A/EFCAB4B.

Its subcellular location is the cell membrane. It carries out the reaction Ca(2+)(in) = Ca(2+)(out). Its activity is regulated as follows. CRAC channels are regulated by fast Ca(2+)-dependent inactivation (FCDI), a mechanism that limits Ca(2+) influx and cell toxicity. ORAI2 channels display prominent FCDI. Inhibited by lanthanides such as Gd(3+) ions. In terms of biological role, pore-forming subunit of inward rectifying Ca(2+) release-activated Ca(2+) (CRAC) channels. Assembles with ORAI1 and ORAI3 to form hexameric CRAC channels that mediate Ca(2+) influx upon depletion of endoplasmic reticulum Ca(2+) store and channel activation by Ca(2+) sensor STIM1, a process known as store-operated Ca(2+) entry (SOCE). Various pore subunit combinations may account for distinct CRAC channel spatiotemporal and cell-type specific dynamics. ORAI1 mainly contributes to the generation of Ca(2+) plateaus involved in sustained Ca(2+) entry and is dispensable for cytosolic Ca(2+) oscillations, whereas ORAI2 and ORAI3 generate oscillatory patterns. CRAC channels assemble in Ca(2+) signaling microdomains where Ca(2+) influx is coupled to calmodulin and calcineurin signaling and activation of NFAT transcription factors recruited to ORAI1 via AKAP5. CRAC channels are the main pathway for Ca(2+) influx in T cells and promote the immune response to pathogens by activating NFAT-dependent cytokine and chemokine transcription. The polypeptide is Protein orai-2 (ORAI2) (Homo sapiens (Human)).